The sequence spans 751 residues: Conserved oligomeric Golgi complex subunit 5 (751 aa).

Disordered regions lie at residues 1-21 and 244-263; these read MVTGDPVATKTPNAADSDDND and SPTHNVSKPAPSRGPGKTPQ.

This sequence belongs to the COG5 family. In terms of assembly, component of the conserved oligomeric Golgi complex which is composed of eight different subunits and is required for normal Golgi morphology and localization.

The protein resides in the golgi apparatus membrane. In terms of biological role, required for normal Golgi function and necessary during spermatogenesis. Required for cleavage furrow ingression during cytokinesis in dividing spermatocytes and for the extensive polarized cell growth that accompanies spermatid elongation. The sequence is that of Conserved oligomeric Golgi complex subunit 5 (fws) from Drosophila melanogaster (Fruit fly).